The sequence spans 474 residues: Glutamyl-tRNA(Gln) amidotransferase subunit A (474 aa).

Residues Lys-76 and Ser-151 each act as charge relay system in the active site. Ser-175 functions as the Acyl-ester intermediate in the catalytic mechanism.

It belongs to the amidase family. GatA subfamily. As to quaternary structure, heterotrimer of A, B and C subunits.

The catalysed reaction is L-glutamyl-tRNA(Gln) + L-glutamine + ATP + H2O = L-glutaminyl-tRNA(Gln) + L-glutamate + ADP + phosphate + H(+). Allows the formation of correctly charged Gln-tRNA(Gln) through the transamidation of misacylated Glu-tRNA(Gln) in organisms which lack glutaminyl-tRNA synthetase. The reaction takes place in the presence of glutamine and ATP through an activated gamma-phospho-Glu-tRNA(Gln). This Chlorobium chlorochromatii (strain CaD3) protein is Glutamyl-tRNA(Gln) amidotransferase subunit A.